Here is a 264-residue protein sequence, read N- to C-terminus: Phosphonoacetaldehyde hydrolase (264 aa).

The Nucleophile role is filled by D9. Residues D9 and A11 each contribute to the Mg(2+) site. The active-site Schiff-base intermediate with substrate is the K50. Position 183 (D183) interacts with Mg(2+).

The protein belongs to the HAD-like hydrolase superfamily. PhnX family. As to quaternary structure, homodimer. It depends on Mg(2+) as a cofactor.

The enzyme catalyses phosphonoacetaldehyde + H2O = acetaldehyde + phosphate + H(+). Its function is as follows. Involved in phosphonate degradation. This is Phosphonoacetaldehyde hydrolase from Bacillus cereus (strain B4264).